The sequence spans 766 residues: DNA ligase (766 aa).

The interval 1-30 (MSTVNAKGAKPATDANGQSLNPEEPSEALR) is disordered. NAD(+) contacts are provided by residues 57–61 (DAEYD), 106–107 (SL), and E141. Residue K143 is the N6-AMP-lysine intermediate of the active site. R164, E201, K317, and K341 together coordinate NAD(+). Zn(2+) contacts are provided by C435, C438, C454, and C460. A BRCT domain is found at 669-758 (STPRTLEGVT…PEAFGDRADA (90 aa)). Residues 747–766 (QGPEAFGDRADAADQPAAGE) form a disordered region.

Belongs to the NAD-dependent DNA ligase family. LigA subfamily. Mg(2+) serves as cofactor. The cofactor is Mn(2+).

It carries out the reaction NAD(+) + (deoxyribonucleotide)n-3'-hydroxyl + 5'-phospho-(deoxyribonucleotide)m = (deoxyribonucleotide)n+m + AMP + beta-nicotinamide D-nucleotide.. DNA ligase that catalyzes the formation of phosphodiester linkages between 5'-phosphoryl and 3'-hydroxyl groups in double-stranded DNA using NAD as a coenzyme and as the energy source for the reaction. It is essential for DNA replication and repair of damaged DNA. The sequence is that of DNA ligase from Kocuria rhizophila (strain ATCC 9341 / DSM 348 / NBRC 103217 / DC2201).